Here is a 227-residue protein sequence, read N- to C-terminus: UPF0758 protein LPC_1989 (227 aa).

An MPN domain is found at 102 to 225; the sequence is QLSNTQQTYA…YSIFAENKWV (124 aa). Zn(2+)-binding residues include His173, His175, and Asp186. A JAMM motif motif is present at residues 173–186; sequence HNHPSGLSDASQQD.

Belongs to the UPF0758 family.

The chain is UPF0758 protein LPC_1989 from Legionella pneumophila (strain Corby).